The primary structure comprises 617 residues: Vacuolar protein sorting-associated protein 33B (617 aa).

This sequence belongs to the STXBP/unc-18/SEC1 family. Probable core component of the class C core vacuole/endosome tethering (CORVET) complex. The common core is composed of the class C Vps proteins vps-11, vps-16 and vps-18, and which further associates with vps-8 and vps-33.2. Interacts with spe-39. As to expression, broadly expressed in somatic tissues including the pharynx, intestine, spermatheca, and in coelomocytes. Expressed in the lining of the gut lumen.

Its subcellular location is the early endosome. The protein resides in the late endosome membrane. It is found in the lysosome membrane. It localises to the cytoplasmic vesicle. The protein localises to the clathrin-coated vesicle. Its subcellular location is the recycling endosome. Plays a role in vesicle-mediated protein trafficking to lysosomal compartments and in membrane docking/fusion reactions of late endosomes/lysosomes. Believed to act as a component of the putative CORVET endosomal tethering complex which is proposed to be involved in the rab-5-to-rab-7 endosome conversion probably implicating sand-1, and via binding SNAREs and SNARE complexes to mediate tethering and docking events during SNARE-mediated membrane fusion. The CORVET complex is proposed to function as a rab-5 effector to mediate early endosome fusion probably in specific endosome subpopulations. Most likely within the CORVET complex, it is involved in the fusion of endocytic compartments. Required for sperm development and function. The protein is Vacuolar protein sorting-associated protein 33B of Caenorhabditis elegans.